Here is a 755-residue protein sequence, read N- to C-terminus: MTERNIYSVSAEIAGRTLTLEAGRFAEQADGAVVARYGDTMLLATVVCAKEAREGTDFFPLTVDYEEKMYAVGKIPGNFFKREGRPTTTAILISRLTDRPLRPLFPKGFYNEVQVIITTFSIDMENDPGPLAIIAASAALCISDIPFAGPVGAVQMGHLNGQLVVNPKMNEIADSRLDLVVAGTKDAVLMVEAGAYELTEDEMLQAVIDGHAVCKQICDLQEQLVQLCGKPKRPFTPPVVDTSLEEAISAWMGDRLRKAVRSPIKQEREAQTEALKAEVIAHFTADEPEEEIANRTKEVTKAFEKLLKDEVRNAILDEGIRVDGRALDEIRPISIEVGVIPRVHGSAVFTRGQTQVLTITTLGSPGDEQKVDDLGIETSKRYIHHYNFPPFSTGEVRRIGTPRRRDIGHGALAERSLYAVLPDEKDFPYTIRLVSEVLSSNGSSSMASVCGSSLSLMDAGVPIKAPVAGVAMGLITGEDGRWRVLTDIQGLEDALGDMDFKVAGTAKGVTGLQMDIKTTGITYEIMREAFAQARAGRLFILDKMNEVISAPRPELSIYAPRIMTIQIPVDKIGALIGPGGKTIRNICETTGAQIDIEDDGRVFITTPDGAAARQAISMIEGLTREAKVGDIFLGKVVSIKPFGAFVNILPGKDGMVHVSELDEKRVENVEDVVSLGDEINVMVIDIDRTTGKISLSRRAVLTGETPEERKAAGAAPRPRPREEQRGGRDEPRSLRDELRGPRREGDRPRPRRRDD.

D493 and D499 together coordinate Mg(2+). Residues 560-619 enclose the KH domain; the sequence is PRIMTIQIPVDKIGALIGPGGKTIRNICETTGAQIDIEDDGRVFITTPDGAAARQAISMI. Residues 629-698 enclose the S1 motif domain; the sequence is GDIFLGKVVS…TTGKISLSRR (70 aa). The segment at 699–755 is disordered; sequence AVLTGETPEERKAAGAAPRPRPREEQRGGRDEPRSLRDELRGPRREGDRPRPRRRDD. Positions 719–755 are enriched in basic and acidic residues; it reads RPREEQRGGRDEPRSLRDELRGPRREGDRPRPRRRDD.

Belongs to the polyribonucleotide nucleotidyltransferase family. Requires Mg(2+) as cofactor.

It localises to the cytoplasm. The catalysed reaction is RNA(n+1) + phosphate = RNA(n) + a ribonucleoside 5'-diphosphate. In terms of biological role, involved in mRNA degradation. Catalyzes the phosphorolysis of single-stranded polyribonucleotides processively in the 3'- to 5'-direction. In Chloroflexus aurantiacus (strain ATCC 29366 / DSM 635 / J-10-fl), this protein is Polyribonucleotide nucleotidyltransferase.